Consider the following 104-residue polypeptide: MGSKETPDLKIILEFGAGAELLFGNIKKRQLSLNGAQKWTIAELLKWMHANILTERAELFIQGDTVRPGILVLINDTDWELLGELEYELQPNDNVLFISTLHGG.

Glycine 104 carries the 1-thioglycine modification. A Glycyl lysine isopeptide (Gly-Lys) (interchain with K-? in acceptor proteins) cross-link involves residue glycine 104.

It belongs to the URM1 family. As to quaternary structure, interacts with cer. In terms of processing, C-terminal thiocarboxylation occurs in 2 steps, it is first acyl-adenylated (-COAMP) via the hesA/moeB/thiF part of the MOCS3 homolog, then thiocarboxylated (-COSH) via the rhodanese domain of the MOCS3 homolog.

The protein resides in the cytoplasm. Its pathway is tRNA modification; 5-methoxycarbonylmethyl-2-thiouridine-tRNA biosynthesis. Functionally, acts as a sulfur carrier required for 2-thiolation of mcm(5)S(2)U at tRNA wobble positions of cytosolic tRNA(Lys), tRNA(Glu) and tRNA(Gln). Serves as sulfur donor in tRNA 2-thiolation reaction by being thiocarboxylated (-COSH) at its C-terminus by MOCS3. The sulfur is then transferred to tRNA to form 2-thiolation of mcm(5)S(2)U. Also acts as a ubiquitin-like protein (UBL) that is covalently conjugated via an isopeptide bond to lysine residues of target proteins such as Prx2/Jafrac1, Ciao1, Eip71CD and GILT1. The thiocarboxylated form serves as substrate for conjugation and oxidative stress specifically induces the formation of UBL-protein conjugates. This Drosophila grimshawi (Hawaiian fruit fly) protein is Ubiquitin-related modifier 1 homolog.